The chain runs to 2539 residues: Zinc finger FYVE domain-containing protein 26 (2539 aa).

Phosphoserine occurs at positions 297, 615, 619, and 703. 3 disordered regions span residues 594 to 637 (HLPE…SLGV), 699 to 724 (ISSRSPPEKPKQESQSCSGSRDGLQS), and 738 to 806 (WRHK…SLSA). Residues 764–774 (PSLRRGRRTRR) show a composition bias toward basic residues. Residues 787–805 (SLESTSSELSTSTSEGSLS) show a composition bias toward low complexity. At serine 800 the chain carries Phosphoserine. Residues 868–895 (MFMERYQEVIQELAQVEHKIENQNSDAG) are a coiled coil. Positions 1267–1296 (DLPLSTPSSPRTTENPTLERKPYSSPRDSS) are disordered. Residues 1271–1282 (STPSSPRTTENP) are compositionally biased toward polar residues. Phosphoserine is present on residues serine 1742, serine 1764, serine 1780, and serine 1782. Positions 1754 to 1808 (ADPETLPRSPSAEFSPAAPPGISSIHSPSLRERSFPPTQPSQEFVPPATPPARHQ) are disordered. Residues 1760–1769 (PRSPSAEFSP) are compositionally biased toward low complexity. Residues 1812 to 1872 (DETESICMVC…VCDQCYSYCN (61 aa)) form an FYVE-type zinc finger. Zn(2+) is bound by residues cysteine 1818, cysteine 1821, cysteine 1835, cysteine 1838, cysteine 1843, cysteine 1846, cysteine 1864, and cysteine 1867.

Interacts with AP5Z1, AP5B1, AP5S1 and SPG11. Interacts with TTC19 and KIF13A. In terms of tissue distribution, strongest expression in the adrenal gland, bone marrow, adult brain, fetal brain, lung, placenta, prostate, skeletal muscle, testis, thymus, and retina. Intermediate levels are detected in other structures, including the spinal cord.

Its subcellular location is the cytoplasm. The protein localises to the cytoskeleton. The protein resides in the microtubule organizing center. It localises to the centrosome. It is found in the midbody. In terms of biological role, phosphatidylinositol 3-phosphate-binding protein required for the abscission step in cytokinesis: recruited to the midbody during cytokinesis and acts as a regulator of abscission. May also be required for efficient homologous recombination DNA double-strand break repair. The chain is Zinc finger FYVE domain-containing protein 26 (ZFYVE26) from Homo sapiens (Human).